A 715-amino-acid chain; its full sequence is SEC14-like protein 1 (715 aa).

The tract at residues 1–510 is required for interaction and inhibitory function toward RIGI; that stretch reads MVQKYQSPVR…VPKSLYRTAE (510 aa). Positions 3–175 constitute a PRELI/MSF1 domain; that stretch reads QKYQSPVRVY…YLRQLEEEGI (173 aa). T234 carries the phosphothreonine modification. A CRAL-TRIO domain is found at 319–495; that stretch reads PPQVLLDYYA…FLSGECMCDV (177 aa). Residues 521 to 674 enclose the GOLD domain; sequence TETIYQSASV…KCKVMYYTEV (154 aa). At S586 the chain carries Phosphoserine.

As to quaternary structure, interacts with RIGI (via tandem CARD domain); the interaction is direct. Interacts (via GOLD domain) with SLC18A3; the interaction is direct. Interacts with SLC5A7 (via GOLD domain); the interaction is direct.

The protein resides in the cytoplasm. Its subcellular location is the golgi apparatus. In terms of biological role, may play a role in innate immunity by inhibiting the antiviral RIG-I signaling pathway. In this pathway, functions as a negative regulator of RIGI, the cytoplasmic sensor of viral nucleic acids. Prevents the interaction of RIGI with MAVS/IPS1, an important step in signal propagation. May also regulate the SLC18A3 and SLC5A7 cholinergic transporters. The protein is SEC14-like protein 1 of Mus musculus (Mouse).